The sequence spans 350 residues: tRNA uridine(34) hydroxylase (350 aa).

Residues 146 to 240 (DDPDAVFIDM…YARRARAQGL (95 aa)) form the Rhodanese domain. Cys-200 serves as the catalytic Cysteine persulfide intermediate. Residues 319–328 (RRRRAGRENG) show a composition bias toward basic and acidic residues. The disordered stretch occupies residues 319 to 350 (RRRRAGRENGNKIFNKSRGRLNSKLSIPDPAE).

Belongs to the TrhO family.

It catalyses the reaction uridine(34) in tRNA + AH2 + O2 = 5-hydroxyuridine(34) in tRNA + A + H2O. Catalyzes oxygen-dependent 5-hydroxyuridine (ho5U) modification at position 34 in tRNAs. The polypeptide is tRNA uridine(34) hydroxylase (Salmonella newport (strain SL254)).